A 212-amino-acid polypeptide reads, in one-letter code: Putative tyrosine-protein phosphatase OCA1 (212 aa).

A disordered region spans residues 1-27; the sequence is MSNKDTSILKGNVDHEEADSNPKLRKI. Basic and acidic residues predominate over residues 12–22; it reads NVDHEEADSNP. Positions 40-208 constitute a Tyrosine-protein phosphatase domain; that stretch reads NFCPVERQLY…SVEIDPSKVP (169 aa). The active-site Phosphocysteine intermediate is the cysteine 146.

This sequence belongs to the protein-tyrosine phosphatase family.

It is found in the cytoplasm. It catalyses the reaction O-phospho-L-tyrosyl-[protein] + H2O = L-tyrosyl-[protein] + phosphate. Functionally, putative tyrosine-protein phosphatase required for protection against superoxide stress. The sequence is that of Putative tyrosine-protein phosphatase OCA1 (OCA1) from Scheffersomyces stipitis (strain ATCC 58785 / CBS 6054 / NBRC 10063 / NRRL Y-11545) (Yeast).